Reading from the N-terminus, the 192-residue chain is Large ribosomal subunit protein bL9 (192 aa).

A disordered region spans residues 173-192; the sequence is ALRPEDFFDPEADGVDEDEA. Over residues 179 to 192 the composition is skewed to acidic residues; it reads FFDPEADGVDEDEA.

Belongs to the bacterial ribosomal protein bL9 family.

Functionally, binds to the 23S rRNA. The chain is Large ribosomal subunit protein bL9 (rplI) from Rhizobium leguminosarum bv. trifolii.